Consider the following 395-residue polypeptide: 8-amino-7-oxononanoate synthase (395 aa).

R24 contributes to the substrate binding site. 111-112 (GF) is a binding site for pyridoxal 5'-phosphate. Position 136 (H136) interacts with substrate. Pyridoxal 5'-phosphate is bound by residues S184, 209-212 (DDAH), and 240-243 (TLSK). Position 243 is an N6-(pyridoxal phosphate)lysine (K243). Residue T357 participates in substrate binding.

The protein belongs to the class-II pyridoxal-phosphate-dependent aminotransferase family. BioF subfamily. In terms of assembly, homodimer. It depends on pyridoxal 5'-phosphate as a cofactor.

The catalysed reaction is 6-carboxyhexanoyl-[ACP] + L-alanine + H(+) = (8S)-8-amino-7-oxononanoate + holo-[ACP] + CO2. The protein operates within cofactor biosynthesis; biotin biosynthesis. Catalyzes the decarboxylative condensation of pimeloyl-[acyl-carrier protein] and L-alanine to produce 8-amino-7-oxononanoate (AON), [acyl-carrier protein], and carbon dioxide. This Thermoanaerobacter pseudethanolicus (strain ATCC 33223 / 39E) (Clostridium thermohydrosulfuricum) protein is 8-amino-7-oxononanoate synthase.